Here is a 138-residue protein sequence, read N- to C-terminus: Histone H2AX (138 aa).

Positions 1–23 (MSTTGKGGKAKGKTASSKQVSRS) are disordered. Serine 2 bears the N-acetylserine mark. Residues lysine 6, lysine 9, lysine 11, lysine 13, and lysine 18 each carry the N6-acetyllysine modification. Residue serine 123 is modified to Phosphoserine. A Glycyl lysine isopeptide (Lys-Gly) (interchain with G-Cter in ubiquitin) cross-link involves residue lysine 124. A phosphoserine mark is found at serine 125, serine 130, and serine 135. The [ST]-Q motif signature appears at 135–136 (SQ).

The protein belongs to the histone H2A family. In terms of assembly, the nucleosome is a histone octamer containing two molecules each of H2A, H2B, H3 and H4 assembled in one H3-H4 heterotetramer and two H2A-H2B heterodimers. The octamer wraps approximately 147 bp of DNA. Monoubiquitination of Lys-124 gives a specific tag for epigenetic transcriptional repression. In terms of processing, phosphorylated to form H2AX134ph (gamma-H2AX) in response to DNA double-strand breaks (DSBs) generated by exogenous genotoxic agents in both the mitotic MIC and the amitotic MAC. Gamma-H2AX is also found when programmed DNA rearrangements occur, namely homologous recombination in the MIC during prophase of meiosis, and chromosome fragmentation and DNA elimination in developing MACs. Gamma-H2AX is important to recover from exogenous DNA damage and to repair breaks associated with normal micronuclear meiosis and mitosis and macronuclear amitotic division. Post-translationally, acetylation occurs almost exclusively in the MAC.

The protein localises to the nucleus. It localises to the chromosome. Core component of nucleosome which plays a central role in DNA double strand break (DSB) repair. Nucleosomes wrap and compact DNA into chromatin, limiting DNA accessibility to the cellular machineries which require DNA as a template. Histones thereby play a central role in transcription regulation, DNA repair, DNA replication and chromosomal stability. DNA accessibility is regulated via a complex set of post-translational modifications of histones, also called histone code, and nucleosome remodeling. The protein is Histone H2AX (HTA1) of Tetrahymena thermophila (strain SB210).